We begin with the raw amino-acid sequence, 641 residues long: Fructose-1,6-bisphosphatase class 3 (641 aa).

The protein belongs to the FBPase class 3 family. Mn(2+) is required as a cofactor.

It carries out the reaction beta-D-fructose 1,6-bisphosphate + H2O = beta-D-fructose 6-phosphate + phosphate. It participates in carbohydrate biosynthesis; gluconeogenesis. This chain is Fructose-1,6-bisphosphatase class 3, found in Ligilactobacillus salivarius (strain UCC118) (Lactobacillus salivarius).